The primary structure comprises 850 residues: Protein SEY1 (850 aa).

The segment at 1–27 is disordered; the sequence is MSDLPPPDLGSEEISVSPTSSSSSFVP. The Cytoplasmic portion of the chain corresponds to 1–741; sequence MSDLPPPDLG…KRALIQHVTH (741 aa). Over residues 12-27 the composition is skewed to low complexity; that stretch reads EEISVSPTSSSSSFVP. In terms of domain architecture, GB1/RHD3-type G spans 64-297; the sequence is NNNYHIVSVF…NEDFLFKKYY (234 aa). 74-81 is a GTP binding site; the sequence is GSQSTGKS. A helical transmembrane segment spans residues 742–762; sequence IPYYIYIVILVLGWNEFMAVL. At 763–765 the chain is on the lumenal side; that stretch reads RNP. Residues 766–786 traverse the membrane as a helical segment; it reads FFFTLLLMLGAGTYVLYHLNL. At 787-850 the chain is on the cytoplasmic side; the sequence is LKPAMVVVQR…SDLTPPGEGS (64 aa). The disordered stretch occupies residues 816-850; that stretch reads QPQEHAKRLSKMAGITEDKPEEIEMSDLTPPGEGS.

Belongs to the TRAFAC class dynamin-like GTPase superfamily. GB1/RHD3 GTPase family. RHD3 subfamily.

It is found in the endoplasmic reticulum membrane. Functionally, cooperates with the reticulon proteins and tubule-shaping DP1 family proteins to generate and maintain the structure of the tubular endoplasmic reticulum network. Has GTPase activity, which is required for its function in ER organization. The chain is Protein SEY1 from Meyerozyma guilliermondii (strain ATCC 6260 / CBS 566 / DSM 6381 / JCM 1539 / NBRC 10279 / NRRL Y-324) (Yeast).